The primary structure comprises 189 residues: Potassium-transporting ATPase KdpC subunit (189 aa).

The chain crosses the membrane as a helical span at residues 8–28 (LVMLILLTLITGIAYPLLTTG).

Belongs to the KdpC family. In terms of assembly, the system is composed of three essential subunits: KdpA, KdpB and KdpC.

It is found in the cell inner membrane. Functionally, part of the high-affinity ATP-driven potassium transport (or Kdp) system, which catalyzes the hydrolysis of ATP coupled with the electrogenic transport of potassium into the cytoplasm. This subunit acts as a catalytic chaperone that increases the ATP-binding affinity of the ATP-hydrolyzing subunit KdpB by the formation of a transient KdpB/KdpC/ATP ternary complex. This is Potassium-transporting ATPase KdpC subunit from Serratia proteamaculans (strain 568).